The sequence spans 357 residues: MRALKKIINLNALRHNWALIKQRSLPATPMVVLKADAYGHGMTTVAKTLDDARYFAVSCIEEAIALRHLGIDTPVVLLEGVYRADELLLCEYYQFDTLVHNFRQMQWLKEFNGSVKAWLKVDSGMHRLGFTQDEIAEAFAQAHSLPVNIQWQGVITHFACSDEDDLTHAKKQLACMDRLVLPAHWKRCYANSAAIFALPQAHYDYTRSGIMLYGLSPFMHGDGSAYGLQPVMTVITEILAVRHLEKNETAGYGQGFTAPESGWLATIALGYGDGFARTITSGAVPVLIAGQRYPLVGRVAMDMAMVWLGSDRYAEGTIVELFGSHLPTEEVARAAGTIPHTLTTMLMPRVHVEIVGG.

The active-site Proton acceptor; specific for D-alanine is lysine 34. Lysine 34 bears the N6-(pyridoxal phosphate)lysine mark. Arginine 127 provides a ligand contact to substrate. Tyrosine 252 serves as the catalytic Proton acceptor; specific for L-alanine. A substrate-binding site is contributed by methionine 301.

This sequence belongs to the alanine racemase family. Pyridoxal 5'-phosphate serves as cofactor.

It carries out the reaction L-alanine = D-alanine. It functions in the pathway amino-acid biosynthesis; D-alanine biosynthesis; D-alanine from L-alanine: step 1/1. In terms of biological role, catalyzes the interconversion of L-alanine and D-alanine. May also act on other amino acids. The polypeptide is Alanine racemase (alr) (Dichelobacter nodosus (strain VCS1703A)).